The primary structure comprises 207 residues: Small ribosomal subunit protein uS4c (207 aa).

In terms of domain architecture, S4 RNA-binding spans 92 to 156 (MRLDNILFRL…YQSIITKRIE (65 aa)).

Belongs to the universal ribosomal protein uS4 family. As to quaternary structure, part of the 30S ribosomal subunit. Contacts protein S5. The interaction surface between S4 and S5 is involved in control of translational fidelity.

The protein resides in the plastid. It is found in the chloroplast. In terms of biological role, one of the primary rRNA binding proteins, it binds directly to 16S rRNA where it nucleates assembly of the body of the 30S subunit. With S5 and S12 plays an important role in translational accuracy. The polypeptide is Small ribosomal subunit protein uS4c (rps4) (Equisetum palustre (Marsh horsetail)).